Reading from the N-terminus, the 244-residue chain is LexA repressor (244 aa).

The tract at residues 1–24 (MSDSSDTTVDGASDGASDGASGAD) is disordered. Positions 10–24 (DGASDGASDGASGAD) are enriched in low complexity. The H-T-H motif DNA-binding region spans 58–78 (IREIGDAVGLTSTSSVAHQLR). Residues S168 and K205 each act as for autocatalytic cleavage activity in the active site.

Belongs to the peptidase S24 family. In terms of assembly, homodimer.

The catalysed reaction is Hydrolysis of Ala-|-Gly bond in repressor LexA.. In terms of biological role, represses a number of genes involved in the response to DNA damage (SOS response), including recA and lexA. In the presence of single-stranded DNA, RecA interacts with LexA causing an autocatalytic cleavage which disrupts the DNA-binding part of LexA, leading to derepression of the SOS regulon and eventually DNA repair. In Mycobacterium ulcerans (strain Agy99), this protein is LexA repressor.